The following is a 516-amino-acid chain: UvrABC system protein C (516 aa).

The 79-residue stretch at 9 to 87 folds into the GIY-YIG domain; the sequence is HLPGCYLFKD…IKKHWPRYNI (79 aa). In terms of domain architecture, UVR spans 191 to 226; the sequence is GELIESMEKEMKKMAAKQMFEQAMALRDEISALEYL.

This sequence belongs to the UvrC family. As to quaternary structure, interacts with UvrB in an incision complex.

It is found in the cytoplasm. Its function is as follows. The UvrABC repair system catalyzes the recognition and processing of DNA lesions. UvrC both incises the 5' and 3' sides of the lesion. The N-terminal half is responsible for the 3' incision and the C-terminal half is responsible for the 5' incision. The polypeptide is UvrABC system protein C (Methanosarcina acetivorans (strain ATCC 35395 / DSM 2834 / JCM 12185 / C2A)).